The sequence spans 309 residues: MQAVLQSAHSSRRLMLLLSMLLNAAIQPRSIIVSATDDVANVSPCEMESLINQLMSPSPEYQLHASALRNQLKNLLRERQLAVGEEQPLGEYPDYLEEDKRSVAALAAQGLLNAPKRSLATLAKNGQLPTAEPGEDYGDADSGEPSEQKRYIGSLARAGGLMTYGKRNVGTLARDFQLPIPNGKRNIATMARLQSAPSTHRDPKRNVAAVARYNSQHGHIQRAGAEKRNLGALKSSPVHGVQQKREDEEMLLPAAAPDYADPMQSYWWYPSYAGYADLDWNDYRRAEKRFLGRVLPPTRATASTHRSRL.

A signal peptide spans 1–28 (MQAVLQSAHSSRRLMLLLSMLLNAAIQP). A propeptide spanning residues 29–99 (RSIIVSATDD…GEYPDYLEED (71 aa)) is cleaved from the precursor. The segment at 126–147 (GQLPTAEPGEDYGDADSGEPSE) is disordered. The segment covering 133 to 144 (PGEDYGDADSGE) has biased composition (acidic residues). At tyrosine 164 the chain carries Tyrosine amide. An Asparagine amide modification is found at asparagine 182.

As to expression, MTYamide peptide: Expressed in the larval CNS (at protein level). NAP peptide: Expressed in the larval CNS (at protein level). IPNamide peptide: Expressed in the ventral ganglion of the third larval instar and adult brain (at protein level).

The protein localises to the secreted. Its function is as follows. Acts as a ligand for the receptor-type guanylate cyclase Gyc76C. Stimulates Gyc76c-dependent cGMP production and modulates the IMD innate immune pathway in response to salt stress by inducing nuclear translocation of NF-kappa-B protein Rel which leads to increased expression of the antimicrobial peptide diptericin. Does not appear to play a role in Gyc76C-mediated wing development. The sequence is that of Neuropeptide-like 1 (Nplp1) from Drosophila melanogaster (Fruit fly).